The following is a 146-amino-acid chain: Hemoglobin subunit beta-2 (146 aa).

The Globin domain occupies 2-146 (FLSAEEKGLV…VASALAHRYH (145 aa)). K17 bears the N6-succinyllysine mark. Residues S44 and S50 each carry the phosphoserine modification. Position 59 is an N6-succinyllysine (K59). The heme b site is built by H63 and H92. The residue at position 104 (R104) is an Asymmetric dimethylarginine.

Belongs to the globin family. In terms of assembly, heterotetramer of two alpha chains and two beta chains. As to expression, red blood cells.

Functionally, involved in oxygen transport from the lung to the various peripheral tissues. This chain is Hemoglobin subunit beta-2 (HBB2), found in Panthera pardus saxicolor (Northern Persian leopard).